The primary structure comprises 179 residues: Disulfide bond formation protein B (179 aa).

The Cytoplasmic segment spans residues 1 to 14 (MLSYFKELSLRRPA). A helical transmembrane segment spans residues 15 to 31 (WLLLATLACTLEVTGLY). Over 32 to 49 (FQHKLGLIPCVMCIYERV) the chain is Periplasmic. Cys-41 and Cys-44 are disulfide-bonded. The chain crosses the membrane as a helical span at residues 50-65 (ALTGLLIAGLIALIAP). At 66-72 (NFFLFRW) the chain is on the cytoplasmic side. The chain crosses the membrane as a helical span at residues 73–90 (LALVLWGFSAFKGLSLSI). Residues 91–146 (KHYDYQANPSPWNQCEFKPQFPQTIPLDEWFPNIFAAGTVNCSEKQWQMLGWGMPE) lie on the Periplasmic side of the membrane. The cysteines at positions 105 and 132 are disulfide-linked. The helical transmembrane segment at 147 to 165 (WLIVAFSLFMLFFLIVFMS) threads the bilayer. Over 166–179 (QFKRAKPQYRSVFR) the chain is Cytoplasmic.

The protein belongs to the DsbB family.

The protein resides in the cell inner membrane. In terms of biological role, required for disulfide bond formation in some periplasmic proteins. Acts by oxidizing the DsbA protein. The sequence is that of Disulfide bond formation protein B from Haemophilus ducreyi (strain 35000HP / ATCC 700724).